The primary structure comprises 134 residues: MKPGEIIVKRTEIEVNQGHNATILNVKNTGDRPIQVGSHYHFFEANPALQFDHEKAYGKRLDIPAGAAVRFEPGDEKEVQLVEYSGKRKIYGFHGDVNGSIDESRVYKLEDDSTATEVIAEQDKTSENANKGRG.

Belongs to the urease beta subunit family. Heterotrimer of UreA (gamma), UreB (beta) and UreC (alpha) subunits. Three heterotrimers associate to form the active enzyme.

Its subcellular location is the cytoplasm. It carries out the reaction urea + 2 H2O + H(+) = hydrogencarbonate + 2 NH4(+). Its pathway is nitrogen metabolism; urea degradation; CO(2) and NH(3) from urea (urease route): step 1/1. The sequence is that of Urease subunit beta from Staphylococcus saprophyticus subsp. saprophyticus (strain ATCC 15305 / DSM 20229 / NCIMB 8711 / NCTC 7292 / S-41).